We begin with the raw amino-acid sequence, 322 residues long: MVGSGAAGSASSLQGNGSNSSGLKSLLRSAPVSVPPSSTSNQTLSLSNPAPVGPQAVVSQPAGGATAAVSVNRTASDTATFSKYLNTAQALHQMGVIVPGLEKWGGNNGTGVVASRRDATSTNLPHAAGASQTGLGTGSPREPALTATSQRAVTVVAGPLRAGNSSETDALPNVITQLYHTSTAQLAYLNGQIVVMSSARVPSLWYWVVGEDQESGKATWWAKTELNWGTDKQKQFVENQLGFKDDSNSDSKNSNLKTQGLTQPAYLIAGLDVVADHLVFAAFKAGAVGYDMTTDSNASTYNQALVWSTTAGLDSDGGTRLW.

Residues 1–48 are compositionally biased toward low complexity; sequence MVGSGAAGSASSLQGNGSNSSGLKSLLRSAPVSVPPSSTSNQTLSLSN. Disordered stretches follow at residues 1 to 59 and 118 to 145; these read MVGS…AVVS and DATS…EPAL. Positions 120–134 are enriched in polar residues; sequence TSTNLPHAAGASQTG.

It belongs to the MgpC family.

In Mycoplasma pneumoniae (strain ATCC 29342 / M129 / Subtype 1) (Mycoplasmoides pneumoniae), this protein is Putative MgpC-like protein MPN_367.